Here is a 458-residue protein sequence, read N- to C-terminus: 5-hydroxytryptamine receptor 2C (458 aa).

The signal sequence occupies residues 1-32 (MVNLRNAVHSFLVHLIGLLVWQSDISVSPVAA). Over 33–55 (IVTDIFNTSDGGRFKFPDGVQNW) the chain is Extracellular. Asn-39 is a glycosylation site (N-linked (GlcNAc...) asparagine). A helical transmembrane segment spans residues 56-80 (PALSIVIIIIMTIGGNILVIMAVSM). Residues 81-86 (EKKLHN) are Cytoplasmic-facing. Residues 87–111 (ATNYFLMSLAIADMLVGLLVMPLSL) traverse the membrane as a helical segment. Residues 112–128 (LAILYDYVWPLPRYLCP) lie on the Extracellular side of the membrane. Cys-127 and Cys-207 form a disulfide bridge. A helical transmembrane segment spans residues 129–151 (VWISLDVLFSTASIMHLCAISLD). Ergotamine is bound at residue Thr-139. The short motif at 151-153 (DRY) is the DRY motif; important for ligand-induced conformation changes element. Topologically, residues 152-167 (RYVAIRNPIEHSRFNS) are cytoplasmic. Residues 168 to 189 (RTKAIMKIAIVWAISIGVSVPI) traverse the membrane as a helical segment. Topologically, residues 190 to 213 (PVIGLRDEEKVFVNNTTCVLNDPN) are extracellular. Asn-204 carries N-linked (GlcNAc...) asparagine glycosylation. Ergotamine is bound at residue Leu-209. Residues 214–236 (FVLIGSFVAFFIPLTIMVITYCL) form a helical membrane-spanning segment. Over 237 to 311 (TIYVLRRQAL…AINNERKASK (75 aa)) the chain is Cytoplasmic. The segment at 274–301 (EENSANPNQDQNARRRKKKERRPRGTMQ) is disordered. Basic residues predominate over residues 287–297 (RRRKKKERRPR). The helical transmembrane segment at 312–336 (VLGIVFFVFLIMWCPFFITNILSVL) threads the bilayer. Cys-337 and Cys-341 are oxidised to a cystine. At 337–347 (CEKSCNQKLME) the chain is on the extracellular side. A helical membrane pass occupies residues 348 to 370 (KLLNVFVWIGYVCSGINPLVYTL). The NPxxY motif; important for ligand-induced conformation changes and signaling motif lies at 364 to 368 (NPLVY). The Cytoplasmic portion of the chain corresponds to 371–458 (FNKIYRRAFS…SVVSERISSV (88 aa)). Residues 456-458 (SSV) carry the PDZ-binding motif.

It belongs to the G-protein coupled receptor 1 family. As to quaternary structure, interacts with MPDZ. Interacts with ARRB2. Interacts with MPP3; this interaction stabilizes the receptor at the plasma membrane and prevents the desensitization of the HTR2C receptor-mediated calcium response. In terms of processing, N-glycosylated. In terms of tissue distribution, detected in brain.

The protein resides in the cell membrane. Its activity is regulated as follows. Inhibited by inverse agonist ritanserin. Its function is as follows. G-protein coupled receptor for 5-hydroxytryptamine (serotonin). Also functions as a receptor for various drugs and psychoactive substances, including ergot alkaloid derivatives, 1-2,5,-dimethoxy-4-iodophenyl-2-aminopropane (DOI) and lysergic acid diethylamide (LSD). Ligand binding causes a conformation change that triggers signaling via guanine nucleotide-binding proteins (G proteins) and modulates the activity of downstream effectors. HTR2C is coupled to G(q)/G(11) G alpha proteins and activates phospholipase C-beta, releasing diacylglycerol (DAG) and inositol 1,4,5-trisphosphate (IP3) second messengers that modulate the activity of phosphatidylinositol 3-kinase and promote the release of Ca(2+) ions from intracellular stores, respectively. Beta-arrestin family members inhibit signaling via G proteins and mediate activation of alternative signaling pathways. Regulates neuronal activity via the activation of short transient receptor potential calcium channels in the brain, and thereby modulates the activation of pro-opiomelanocortin neurons and the release of CRH that then regulates the release of corticosterone. Plays a role in the regulation of appetite and eating behavior, responses to anxiogenic stimuli and stress. Plays a role in insulin sensitivity and glucose homeostasis. This chain is 5-hydroxytryptamine receptor 2C, found in Homo sapiens (Human).